Consider the following 1088-residue polypeptide: Adenylate-forming reductase Nps10 (1088 aa).

Residues 1-22 form a disordered region; that stretch reads MSSVSIQIPLPTPPPTQAHNSQ. The adenylation (A) domain stretch occupies residues 38-451; it reads FDWHSKNSPN…KIFGRTDDQI (414 aa). Residues histidine 261, 357-358, threonine 362, and 443-446 each bind AMP; these read NL and IFGR. The Carrier domain occupies 586–668; it reads AWDSAKTLGF…SLASFVSSVA (83 aa). Serine 621 carries the O-(pantetheine 4'-phosphoryl)serine modification. Positions 712 to 951 are reductase (R) domain; sequence LTGSTGALGS…IPVNVAAAAI (240 aa). NADP(+) contacts are provided by residues 716-719, 804-806, tyrosine 875, and lysine 879; these read TGAL and NAW.

It belongs to the adenylate-forming reductase family.

Functionally, adenylate-forming reductase, a natural product biosynthesis enzyme that resembles non-ribosomal peptide synthetases, yet serves to modify one substrate, rather than to condense two or more building blocks. The A-domain preferentially accepts phenylpyruvic acid and benzoic acid as substrate. The natural product of the enzyme is not yet known. The protein is Adenylate-forming reductase Nps10 of Heterobasidion annosum (Root rot fungus).